A 243-amino-acid polypeptide reads, in one-letter code: Membrane selenoprotein (243 aa).

A disordered region spans residues 12–63; that stretch reads GEDCEGGVUARPSSSSSSINNASDESTPLISKTNDEEKANIGISSTSNSPQE. Position 20 (U20) is a non-standard amino acid, selenocysteine. 2 stretches are compositionally biased toward polar residues: residues 30 to 43 and 53 to 63; these read INNASDESTPLISK and GISSTSNSPQE. 4 consecutive transmembrane segments (helical) span residues 74–94, 102–122, 144–164, and 199–219; these read ILTLLISIPALVGSUCWPVLI, VSAGSVELAHSLTFAITLSIL, IKFGPFYLTAIAVPLATFDIL, and VMGWFSAIVFTYTGYACLLVG. U88 is a non-standard amino acid (selenocysteine).

The protein localises to the membrane. In Dictyostelium discoideum (Social amoeba), this protein is Membrane selenoprotein (msp).